The chain runs to 328 residues: Ketol-acid reductoisomerase (NADP(+)) (328 aa).

A KARI N-terminal Rossmann domain is found at 2–182; that stretch reads AKIYRDVDAS…GATRAGVIET (181 aa). NADP(+) contacts are provided by residues 25–28, arginine 48, serine 53, and 83–86; these read YGIQ and DMEQ. Histidine 108 is an active-site residue. Glycine 134 is an NADP(+) binding site. In terms of domain architecture, KARI C-terminal knotted spans 183 to 328; it reads TFAEETETDL…IEMRRLLFGQ (146 aa). Mg(2+) is bound by residues aspartate 191, glutamate 195, glutamate 227, and glutamate 231. Position 252 (serine 252) interacts with substrate.

This sequence belongs to the ketol-acid reductoisomerase family. It depends on Mg(2+) as a cofactor.

It catalyses the reaction (2R)-2,3-dihydroxy-3-methylbutanoate + NADP(+) = (2S)-2-acetolactate + NADPH + H(+). The enzyme catalyses (2R,3R)-2,3-dihydroxy-3-methylpentanoate + NADP(+) = (S)-2-ethyl-2-hydroxy-3-oxobutanoate + NADPH + H(+). It functions in the pathway amino-acid biosynthesis; L-isoleucine biosynthesis; L-isoleucine from 2-oxobutanoate: step 2/4. It participates in amino-acid biosynthesis; L-valine biosynthesis; L-valine from pyruvate: step 2/4. Functionally, involved in the biosynthesis of branched-chain amino acids (BCAA). Catalyzes an alkyl-migration followed by a ketol-acid reduction of (S)-2-acetolactate (S2AL) to yield (R)-2,3-dihydroxy-isovalerate. In the isomerase reaction, S2AL is rearranged via a Mg-dependent methyl migration to produce 3-hydroxy-3-methyl-2-ketobutyrate (HMKB). In the reductase reaction, this 2-ketoacid undergoes a metal-dependent reduction by NADPH to yield (R)-2,3-dihydroxy-isovalerate. This chain is Ketol-acid reductoisomerase (NADP(+)), found in Pyrobaculum arsenaticum (strain DSM 13514 / JCM 11321 / PZ6).